The sequence spans 243 residues: MTPVSSRLQPLIIPCVDIQSGRAVRLYEGDPDRETVYFESPLEAARHWAALGAGLVHLVDLDAATGRGENRAVITQITAELGVPVEVGGGIRDRAAAEALLDAGVGRVVIGTAAVKNPALVRELIAAHGPSRVVVSLDARGLDVAIHGWAEGSGVSVAELAPLLAEAGLETLIFTDVTRDGTLRGLDRDLMRQVRQLWSNTLIVGGGVATLDDVRLLAEEGIQGAIVGRAIYEGTLVYPVTGL.

Asp17 acts as the Proton acceptor in catalysis. The Proton donor role is filled by Asp138.

Belongs to the HisA/HisF family.

It is found in the cytoplasm. The enzyme catalyses 1-(5-phospho-beta-D-ribosyl)-5-[(5-phospho-beta-D-ribosylamino)methylideneamino]imidazole-4-carboxamide = 5-[(5-phospho-1-deoxy-D-ribulos-1-ylimino)methylamino]-1-(5-phospho-beta-D-ribosyl)imidazole-4-carboxamide. It participates in amino-acid biosynthesis; L-histidine biosynthesis; L-histidine from 5-phospho-alpha-D-ribose 1-diphosphate: step 4/9. This Deinococcus geothermalis (strain DSM 11300 / CIP 105573 / AG-3a) protein is 1-(5-phosphoribosyl)-5-[(5-phosphoribosylamino)methylideneamino] imidazole-4-carboxamide isomerase.